We begin with the raw amino-acid sequence, 154 residues long: SsrA-binding protein (154 aa).

This sequence belongs to the SmpB family.

Its subcellular location is the cytoplasm. In terms of biological role, required for rescue of stalled ribosomes mediated by trans-translation. Binds to transfer-messenger RNA (tmRNA), required for stable association of tmRNA with ribosomes. tmRNA and SmpB together mimic tRNA shape, replacing the anticodon stem-loop with SmpB. tmRNA is encoded by the ssrA gene; the 2 termini fold to resemble tRNA(Ala) and it encodes a 'tag peptide', a short internal open reading frame. During trans-translation Ala-aminoacylated tmRNA acts like a tRNA, entering the A-site of stalled ribosomes, displacing the stalled mRNA. The ribosome then switches to translate the ORF on the tmRNA; the nascent peptide is terminated with the 'tag peptide' encoded by the tmRNA and targeted for degradation. The ribosome is freed to recommence translation, which seems to be the essential function of trans-translation. In Ruminiclostridium cellulolyticum (strain ATCC 35319 / DSM 5812 / JCM 6584 / H10) (Clostridium cellulolyticum), this protein is SsrA-binding protein.